The chain runs to 65 residues: Putative primary metabolism protein prl65 (65 aa).

The interval 1-25 (MTKYSKGNKVEYHPIGGPSGTSTST) is disordered.

In terms of biological role, may play a role in primary metabolism. The sequence is that of Putative primary metabolism protein prl65 from Schizosaccharomyces pombe (strain 972 / ATCC 24843) (Fission yeast).